Consider the following 134-residue polypeptide: Large ribosomal subunit protein bL21 (134 aa).

Belongs to the bacterial ribosomal protein bL21 family. Part of the 50S ribosomal subunit. Contacts protein L20.

In terms of biological role, this protein binds to 23S rRNA in the presence of protein L20. The sequence is that of Large ribosomal subunit protein bL21 from Pelagibacter ubique (strain HTCC1062).